The following is a 189-amino-acid chain: Photosystem I assembly protein Ycf4 (189 aa).

The next 2 helical transmembrane spans lie at 29-49 (WATI…SSYL) and 69-89 (LVMG…WLVI).

Belongs to the Ycf4 family.

The protein resides in the cellular thylakoid membrane. Its function is as follows. Seems to be required for the assembly of the photosystem I complex. The protein is Photosystem I assembly protein Ycf4 of Nostoc punctiforme (strain ATCC 29133 / PCC 73102).